Reading from the N-terminus, the 62-residue chain is Photosystem II reaction center protein Z (62 aa).

Transmembrane regions (helical) follow at residues 8-28 (ALFA…VAFA) and 41-61 (FSGA…NSFI).

This sequence belongs to the PsbZ family. In terms of assembly, PSII is composed of 1 copy each of membrane proteins PsbA, PsbB, PsbC, PsbD, PsbE, PsbF, PsbH, PsbI, PsbJ, PsbK, PsbL, PsbM, PsbT, PsbY, PsbZ, Psb30/Ycf12, at least 3 peripheral proteins of the oxygen-evolving complex and a large number of cofactors. It forms dimeric complexes.

The protein localises to the plastid. The protein resides in the chloroplast thylakoid membrane. Functionally, may control the interaction of photosystem II (PSII) cores with the light-harvesting antenna, regulates electron flow through the 2 photosystem reaction centers. PSII is a light-driven water plastoquinone oxidoreductase, using light energy to abstract electrons from H(2)O, generating a proton gradient subsequently used for ATP formation. This is Photosystem II reaction center protein Z from Adiantum capillus-veneris (Maidenhair fern).